A 239-amino-acid polypeptide reads, in one-letter code: Fatty acid metabolism regulator protein (239 aa).

The HTH gntR-type domain maps to 6 to 74 (QSPAGFAEEY…HGKPTKVNNF (69 aa)). Positions 34-53 (ERELSELIGVTRTTLREVLQ) form a DNA-binding region, H-T-H motif.

Homodimer.

The protein resides in the cytoplasm. Functionally, multifunctional regulator of fatty acid metabolism. The sequence is that of Fatty acid metabolism regulator protein from Serratia proteamaculans (strain 568).